We begin with the raw amino-acid sequence, 133 residues long: Large ribosomal subunit protein bL17 (133 aa).

This sequence belongs to the bacterial ribosomal protein bL17 family. Part of the 50S ribosomal subunit. Contacts protein L32.

The chain is Large ribosomal subunit protein bL17 from Nitratidesulfovibrio vulgaris (strain ATCC 29579 / DSM 644 / CCUG 34227 / NCIMB 8303 / VKM B-1760 / Hildenborough) (Desulfovibrio vulgaris).